An 87-amino-acid polypeptide reads, in one-letter code: UPF0473 protein PTH_1066 (87 aa).

This sequence belongs to the UPF0473 family.

This is UPF0473 protein PTH_1066 from Pelotomaculum thermopropionicum (strain DSM 13744 / JCM 10971 / SI).